A 79-amino-acid polypeptide reads, in one-letter code: Small ribosomal subunit protein bS18 (79 aa).

As to quaternary structure, part of the 30S ribosomal subunit. Forms a tight heterodimer with protein bS6. Both N-terminus methionine truncation and retention have been observed for this protein. In terms of processing, may be methylated up to 6 times, on undetermined residues.

In terms of biological role, binds as a heterodimer with protein bS6 to the central domain of the 16S rRNA, where it helps stabilize the platform of the 30S subunit. The polypeptide is Small ribosomal subunit protein bS18 (Rhodopseudomonas palustris (strain ATCC BAA-98 / CGA009)).